Here is a 118-residue protein sequence, read N- to C-terminus: Large ribosomal subunit protein bL19 (118 aa).

The protein belongs to the bacterial ribosomal protein bL19 family.

Its function is as follows. This protein is located at the 30S-50S ribosomal subunit interface and may play a role in the structure and function of the aminoacyl-tRNA binding site. In Campylobacter fetus subsp. fetus (strain 82-40), this protein is Large ribosomal subunit protein bL19.